Here is a 702-residue protein sequence, read N- to C-terminus: Dynein intermediate chain 2, ciliary (702 aa).

The segment covering 1–11 (MPVKSTKTKGG) has biased composition (low complexity). Disordered stretches follow at residues 1 to 64 (MPVK…IKPD), 128 to 226 (DEAR…FSST), and 243 to 272 (QEKA…ETQS). 2 stretches are compositionally biased toward basic and acidic residues: residues 36 to 52 (GKKD…HGGE) and 152 to 176 (GEEK…RDEE). Polar residues predominate over residues 189 to 206 (KLTNQFNFSERASQTYNN). The span at 243 to 261 (QEKAKEKKAAPSKKDDDKS) shows a compositional bias: basic and acidic residues. WD repeat units lie at residues 380-420 (PTDS…ANPV), 429-472 (KHTD…LTYT), 490-533 (TQLT…QFLD), 537-577 (AHHM…GPMF), 580-620 (DLGS…YEPI), and 628-667 (KKKT…RKVP).

The protein belongs to the dynein intermediate chain family. In terms of assembly, consists of at least two heavy chains (alpha and beta), three intermediate chains and several light chains.

It is found in the cytoplasm. Its subcellular location is the cytoskeleton. The protein localises to the cilium axoneme. Its function is as follows. Microtubule-binding protein that may be involved in dynein outer arm assembly on the axoneme. The polypeptide is Dynein intermediate chain 2, ciliary (Heliocidaris crassispina (Sea urchin)).